Here is a 296-residue protein sequence, read N- to C-terminus: 4-hydroxy-tetrahydrodipicolinate synthase (296 aa).

Thr49 contacts pyruvate. The active-site Proton donor/acceptor is Tyr137. The active-site Schiff-base intermediate with substrate is Lys165. Ile207 is a pyruvate binding site.

It belongs to the DapA family. In terms of assembly, homotetramer; dimer of dimers.

It localises to the cytoplasm. The catalysed reaction is L-aspartate 4-semialdehyde + pyruvate = (2S,4S)-4-hydroxy-2,3,4,5-tetrahydrodipicolinate + H2O + H(+). The protein operates within amino-acid biosynthesis; L-lysine biosynthesis via DAP pathway; (S)-tetrahydrodipicolinate from L-aspartate: step 3/4. Catalyzes the condensation of (S)-aspartate-beta-semialdehyde [(S)-ASA] and pyruvate to 4-hydroxy-tetrahydrodipicolinate (HTPA). The chain is 4-hydroxy-tetrahydrodipicolinate synthase from Rhodopseudomonas palustris (strain BisA53).